The chain runs to 221 residues: PKHD-type hydroxylase PMT9312_1262 (221 aa).

The Fe2OG dioxygenase domain maps to 80-174; sequence IIHGIMFTKS…RLVCVGWIES (95 aa). 3 residues coordinate Fe cation: His-98, Asp-100, and His-155. Residue Arg-165 participates in 2-oxoglutarate binding.

Fe(2+) serves as cofactor. L-ascorbate is required as a cofactor.

This Prochlorococcus marinus (strain MIT 9312) protein is PKHD-type hydroxylase PMT9312_1262.